The primary structure comprises 354 residues: Uroporphyrinogen decarboxylase (354 aa).

Residues 27-31 (RQAGR), Asp-77, Tyr-154, Thr-209, and His-327 each bind substrate.

Belongs to the uroporphyrinogen decarboxylase family. As to quaternary structure, homodimer.

Its subcellular location is the cytoplasm. It catalyses the reaction uroporphyrinogen III + 4 H(+) = coproporphyrinogen III + 4 CO2. The protein operates within porphyrin-containing compound metabolism; protoporphyrin-IX biosynthesis; coproporphyrinogen-III from 5-aminolevulinate: step 4/4. In terms of biological role, catalyzes the decarboxylation of four acetate groups of uroporphyrinogen-III to yield coproporphyrinogen-III. The protein is Uroporphyrinogen decarboxylase of Pectobacterium carotovorum subsp. carotovorum (strain PC1).